Consider the following 619-residue polypeptide: MFYHLIAPLKNKTPPLTYFSKERHLKGALVNIPLRNKTLLGVVLEEVSKPSFECLELEKTPYFLLPFQIELAIFIAQYYSANLSSVLSLFAPFKECDLVGLEKIEPTLNALSQTQTNALKELQKHPASLLFGDTGSGKTEIYMHAIAQTLEQKKSALLLVPEIALTPQMQQRLKKVFKENLGLWHSKLSQNQKKQFLEKLYSQEIKLVVGTRSALFLPLKELGLIIVDEEHDFSYKSQQSPMYNARDLCLYLSHKFPIQVILGSATPSLSSYQRFKDKALVRLKGRYTPTQKNIIFEKTERFITPKLLEALKQVIDKNEQAIIFVPTRANFKTLLCPNCYKSVQCPFCSVNMSLHLKTNKLMCHYCHFSSPIPKICNACQSEVLVGKRIGTMQVLKELESLLEGAKIAILDKDHTSTPKKLHNILNDFNAQKTNILIGTQMISKGHDYAKVSLAVVLGIDNIIKSNSYRALEEGVSLLYQIAGRSARQISGQVFIQSTETDLLENFLEDYEDFLQYELQERCELYPPFSRLCLLEFKHKNEEKAQQLSLEASQTLSLCLEKGVTLSNFKAPIEKIASSYRYLILLRSKNPLSLIKSVHAFLKTAPNIPCSVNMDPVDIF.

The 167-residue stretch at 119–285 (LKELQKHPAS…KDKALVRLKG (167 aa)) folds into the Helicase ATP-binding domain. Residue 132 to 139 (GDTGSGKT) participates in ATP binding. The short motif at 228-231 (DEEH) is the DEAH box element. Zn(2+) is bound by residues Cys-336, Cys-339, Cys-345, Cys-348, Cys-363, Cys-366, Cys-376, and Cys-379. In terms of domain architecture, Helicase C-terminal spans 371-532 (PIPKICNACQ…ELYPPFSRLC (162 aa)).

This sequence belongs to the helicase family. PriA subfamily. As to quaternary structure, component of the replication restart primosome. Requires Zn(2+) as cofactor.

The catalysed reaction is Couples ATP hydrolysis with the unwinding of duplex DNA by translocating in the 3'-5' direction.. It catalyses the reaction ATP + H2O = ADP + phosphate + H(+). Functionally, initiates the restart of stalled replication forks, which reloads the replicative helicase on sites other than the origin of replication. Recognizes and binds to abandoned replication forks and remodels them to uncover a helicase loading site. Promotes assembly of the primosome at these replication forks. In Helicobacter pylori (strain J99 / ATCC 700824) (Campylobacter pylori J99), this protein is Replication restart protein PriA.